A 656-amino-acid chain; its full sequence is tRNA 5-methylaminomethyl-2-thiouridine biosynthesis bifunctional protein MnmC (656 aa).

The interval 1–236 is tRNA (mnm(5)s(2)U34)-methyltransferase; the sequence is MTDPLIPAVL…KRAMLVGHFA (236 aa). The interval 260 to 656 is FAD-dependent cmnm(5)s(2)U34 oxidoreductase; the sequence is IGAGLAGCAV…LRALRQGAVS (397 aa).

It in the N-terminal section; belongs to the methyltransferase superfamily. tRNA (mnm(5)s(2)U34)-methyltransferase family. In the C-terminal section; belongs to the DAO family. Requires FAD as cofactor.

It is found in the cytoplasm. It carries out the reaction 5-aminomethyl-2-thiouridine(34) in tRNA + S-adenosyl-L-methionine = 5-methylaminomethyl-2-thiouridine(34) in tRNA + S-adenosyl-L-homocysteine + H(+). Its function is as follows. Catalyzes the last two steps in the biosynthesis of 5-methylaminomethyl-2-thiouridine (mnm(5)s(2)U) at the wobble position (U34) in tRNA. Catalyzes the FAD-dependent demodification of cmnm(5)s(2)U34 to nm(5)s(2)U34, followed by the transfer of a methyl group from S-adenosyl-L-methionine to nm(5)s(2)U34, to form mnm(5)s(2)U34. The chain is tRNA 5-methylaminomethyl-2-thiouridine biosynthesis bifunctional protein MnmC from Paraburkholderia phytofirmans (strain DSM 17436 / LMG 22146 / PsJN) (Burkholderia phytofirmans).